The sequence spans 36 residues: Adenylate kinase (36 aa).

10-15 lines the ATP pocket; that stretch reads GAGKGT. Positions 30-36 are NMP; that stretch reads ATGDLFR. AMP-binding residues include Thr31 and Arg36.

Belongs to the adenylate kinase family. As to quaternary structure, monomer.

It localises to the cytoplasm. It catalyses the reaction AMP + ATP = 2 ADP. It functions in the pathway purine metabolism; AMP biosynthesis via salvage pathway; AMP from ADP: step 1/1. Functionally, catalyzes the reversible transfer of the terminal phosphate group between ATP and AMP. Plays an important role in cellular energy homeostasis and in adenine nucleotide metabolism. The sequence is that of Adenylate kinase (adk) from Streptomyces griseus.